The primary structure comprises 181 residues: ATP synthase subunit delta (181 aa).

It belongs to the ATPase delta chain family. In terms of assembly, F-type ATPases have 2 components, F(1) - the catalytic core - and F(0) - the membrane proton channel. F(1) has five subunits: alpha(3), beta(3), gamma(1), delta(1), epsilon(1). F(0) has three main subunits: a(1), b(2) and c(10-14). The alpha and beta chains form an alternating ring which encloses part of the gamma chain. F(1) is attached to F(0) by a central stalk formed by the gamma and epsilon chains, while a peripheral stalk is formed by the delta and b chains.

Its subcellular location is the cell inner membrane. Its function is as follows. F(1)F(0) ATP synthase produces ATP from ADP in the presence of a proton or sodium gradient. F-type ATPases consist of two structural domains, F(1) containing the extramembraneous catalytic core and F(0) containing the membrane proton channel, linked together by a central stalk and a peripheral stalk. During catalysis, ATP synthesis in the catalytic domain of F(1) is coupled via a rotary mechanism of the central stalk subunits to proton translocation. Functionally, this protein is part of the stalk that links CF(0) to CF(1). It either transmits conformational changes from CF(0) to CF(1) or is implicated in proton conduction. This is ATP synthase subunit delta from Chlorobium limicola (strain DSM 245 / NBRC 103803 / 6330).